The following is a 102-amino-acid chain: Monothiol glutaredoxin-S7 (102 aa).

Residues 1 to 101 form the Glutaredoxin domain; that stretch reads MEKLQKMTSE…PMLKRVGALW (101 aa). Residue C21 participates in [2Fe-2S] cluster binding. A Responsive for interaction with TGA factors motif is present at residues 99–102; the sequence is ALWL.

Belongs to the glutaredoxin family. CC-type subfamily.

Its subcellular location is the cytoplasm. The protein localises to the nucleus. Its function is as follows. May only reduce GSH-thiol disulfides, but not protein disulfides. In Arabidopsis thaliana (Mouse-ear cress), this protein is Monothiol glutaredoxin-S7 (GRXS7).